Consider the following 324-residue polypeptide: DNA repair and recombination protein RadA (324 aa).

Residue 114-121 (GEFGSGKT) participates in ATP binding.

It belongs to the eukaryotic RecA-like protein family.

Functionally, involved in DNA repair and in homologous recombination. Binds and assemble on single-stranded DNA to form a nucleoprotein filament. Hydrolyzes ATP in a ssDNA-dependent manner and promotes DNA strand exchange between homologous DNA molecules. The polypeptide is DNA repair and recombination protein RadA (Saccharolobus islandicus (strain Y.N.15.51 / Yellowstone #2) (Sulfolobus islandicus)).